A 564-amino-acid chain; its full sequence is Ubiquitin carboxyl-terminal hydrolase 39 (564 aa).

Positions 1–96 are disordered; that stretch reads MSSRSKRQSH…VRAKNGRVDS (96 aa). The segment covering 28–39 has biased composition (basic and acidic residues); the sequence is IKKERDREKEPE. A Phosphoserine modification is found at serine 46. Lysine 51 is covalently cross-linked (Glycyl lysine isopeptide (Lys-Gly) (interchain with G-Cter in SUMO2)). Low complexity predominate over residues 59-69; sequence REVPAPALPVV. A Phosphoserine modification is found at serine 81. The segment covering 84 to 96 has biased composition (basic and acidic residues); the sequence is EREVRAKNGRVDS. Residues 102 to 199 form a UBP-type; degenerate zinc finger; it reads RHCPYLDTIN…YVLKPTFTKQ (98 aa). Cysteine 135, cysteine 138, histidine 154, and histidine 160 together coordinate Zn(2+). Positions 224–554 constitute a USP domain; it reads VGLNNIKAND…EAYIQIWKRR (331 aa).

It belongs to the peptidase C19 family. As to quaternary structure, the U4/U6-U5 tri-snRNP complex is a building block of the precatalytic spliceosome (spliceosome B complex). Component of the U4/U6-U5 tri-snRNP complex composed of the U4, U6 and U5 snRNAs and at least PRPF3, PRPF4, PRPF6, PRPF8, PRPF31, SNRNP200, TXNL4A, SNRNP40, SNRPB, SNRPD1, SNRPD2, SNRPD3, SNRPE, SNRPF, SNRPG, DDX23, CD2BP2, PPIH, SNU13, EFTUD2, SART1 and USP39, plus LSM2, LSM3, LSM4, LSM5, LSM6, LSM7 and LSM8.

The protein resides in the nucleus. It carries out the reaction Thiol-dependent hydrolysis of ester, thioester, amide, peptide and isopeptide bonds formed by the C-terminal Gly of ubiquitin (a 76-residue protein attached to proteins as an intracellular targeting signal).. In terms of biological role, deubiquitinating enzyme that plays a role in many cellular processes including cellular antiviral response, epithelial morphogenesis, DNA repair or B-cell development. Plays a role in pre-mRNA splicing as a component of the U4/U6-U5 tri-snRNP, one of the building blocks of the precatalytic spliceosome. Specifically regulates immunoglobulin gene rearrangement in a spliceosome-dependent manner, which involves modulating chromatin interactions at the Igh locus and therefore plays an essential role in B-cell development. Regulates AURKB mRNA levels, and thereby plays a role in cytokinesis and in the spindle checkpoint. Regulates apoptosis and G2/M cell cycle checkpoint in response to DNA damage by deubiquitinating and stabilizing CHK2. Also plays an important role in DNA repair by controlling the recruitment of XRCC4/LIG4 to DNA double-strand breaks for non-homologous end-joining repair. Participates in antiviral activity by affecting the type I IFN signaling by stabilizing STAT1 and decreasing its 'Lys-6'-linked ubiquitination. Contributes to non-canonical Wnt signaling during epidermal differentiation. Acts as a negative regulator NF-kappa-B activation through deubiquitination of 'Lys-48'-linked ubiquitination of NFKBIA. This is Ubiquitin carboxyl-terminal hydrolase 39 from Mus musculus (Mouse).